The following is a 238-amino-acid chain: MTPHINAPEGAFADVVLMPGDPLRAKYIAETFLQDVVEVTNVRNMLGFTGTYKGRKISIMGHGMGIPSCSIYAKELITEYGVKKIIRVGSCGTVRMDVKVRDVIIGLGACTDSKVNRIRFKDNDFAAIADFDMAQAAVQAAKAKGKVVRVGNLFSADLFYTPDVEMFDVMEKYGILGVEMEAAGIYGVAAEYGAKALTICTVSDHIRTHEQTTAEERQLTFNDMIEIALDSVLIGDAL.

Histidine 4 is an a purine D-ribonucleoside binding site. Residues glycine 20, arginine 24, arginine 43, and 87–90 (RVGS) each bind phosphate. Residues 179–181 (EME) and 203–204 (SD) each bind a purine D-ribonucleoside. The active-site Proton donor is aspartate 204.

This sequence belongs to the PNP/UDP phosphorylase family. As to quaternary structure, homohexamer; trimer of homodimers.

It catalyses the reaction a purine D-ribonucleoside + phosphate = a purine nucleobase + alpha-D-ribose 1-phosphate. The catalysed reaction is a purine 2'-deoxy-D-ribonucleoside + phosphate = a purine nucleobase + 2-deoxy-alpha-D-ribose 1-phosphate. Functionally, catalyzes the reversible phosphorolytic breakdown of the N-glycosidic bond in the beta-(deoxy)ribonucleoside molecules, with the formation of the corresponding free purine bases and pentose-1-phosphate. The polypeptide is Purine nucleoside phosphorylase DeoD-type (Haemophilus influenzae (strain 86-028NP)).